Consider the following 101-residue polypeptide: uncharacterized protein (101 aa).

A signal peptide spans Met1 to Ala21. The segment covering Arg79–Asp94 has biased composition (polar residues). Residues Arg79–Gln101 form a disordered region.

This is an uncharacterized protein from Escherichia coli (strain K12).